Consider the following 428-residue polypeptide: uncharacterized protein (428 aa).

12 helical membrane-spanning segments follow: residues Leu14 to Phe34, Tyr55 to Ala75, Phe84 to Ser104, Trp107 to Phe127, Phe149 to Leu169, Ala182 to Ile202, Leu238 to Met258, Ser272 to Gly292, Thr302 to Glu322, Thr324 to Leu344, Phe361 to Ala381, and Thr392 to Pro412.

Belongs to the major facilitator superfamily.

Its subcellular location is the cell membrane. This is an uncharacterized protein from Bacillus subtilis (strain 168).